The following is a 177-amino-acid chain: Thymidine kinase (177 aa).

ATP is bound at residue 11-18; the sequence is GPMFSGKS. Catalysis depends on glutamate 83, which acts as the Proton acceptor. Phenylalanine 113 serves as a coordination point for substrate. Positions 138 and 141 each coordinate Zn(2+). 157 to 161 serves as a coordination point for substrate; that stretch reads IEIIG. 2 residues coordinate Zn(2+): cysteine 170 and cysteine 173.

Belongs to the thymidine kinase family. As to quaternary structure, homotetramer. Two molecules of substrate bind to each enzyme tetramer.

It catalyses the reaction thymidine + ATP = dTMP + ADP + H(+). Phosphorylates thymidine and thymidine analogs, such as azidothymidine (AZT). Part of the salvage pathway for pyrimidine deoxyribonucleotide synthesis. This chain is Thymidine kinase (OPG101), found in Variola virus.